The following is a 229-amino-acid chain: 2,3-bisphosphoglycerate-dependent phosphoglycerate mutase 2 (229 aa).

Substrate contacts are provided by residues 8–15 (RHGQSEWN), 21–22 (TG), Arg-60, 87–90 (ERHY), Lys-98, 114–115 (RR), and 183–184 (GN). The Tele-phosphohistidine intermediate role is filled by His-9. The active-site Proton donor/acceptor is Glu-87.

This sequence belongs to the phosphoglycerate mutase family. BPG-dependent PGAM subfamily.

It catalyses the reaction (2R)-2-phosphoglycerate = (2R)-3-phosphoglycerate. The protein operates within carbohydrate degradation; glycolysis; pyruvate from D-glyceraldehyde 3-phosphate: step 3/5. Its function is as follows. Catalyzes the interconversion of 2-phosphoglycerate and 3-phosphoglycerate. The polypeptide is 2,3-bisphosphoglycerate-dependent phosphoglycerate mutase 2 (Latilactobacillus sakei subsp. sakei (strain 23K) (Lactobacillus sakei subsp. sakei)).